The following is a 342-amino-acid chain: MSQPPAAHVPVLYTQVLEGLQVTENGTYLDGTFGRGGHARGVLEHLGPGGRLLVMDKDPEAIAVAEHTFGGDARVSIHRGSFAGLGQVVAAATVDGILLDLGVSSPQLDVAGRGFSFGKDGPLDMRMDPDSGQSAAGWLAQATDREIADVLWTYGEERQSRRIARAIVARRGEQPLLRTAQLADLIASVMPRGDSKTHPATRSFQAIRIHINRELADLEAGLDAALGALKPGGRLAVISFHSLEDRIVKQFMARYAKAPPSNRRLPEAQPFVPTLQLVSGAIKADDSELAVNPRARSAVLRVAEKLGMENRESGMGKGHGAAASRFPTPDSRFPTSPNGDAP.

S-adenosyl-L-methionine contacts are provided by residues 36–38 (GGH), Asp-56, Phe-82, Asp-100, and Gln-107. Residues 309-342 (ENRESGMGKGHGAAASRFPTPDSRFPTSPNGDAP) are disordered. Residues 333-342 (FPTSPNGDAP) are compositionally biased toward polar residues.

This sequence belongs to the methyltransferase superfamily. RsmH family.

It is found in the cytoplasm. It catalyses the reaction cytidine(1402) in 16S rRNA + S-adenosyl-L-methionine = N(4)-methylcytidine(1402) in 16S rRNA + S-adenosyl-L-homocysteine + H(+). In terms of biological role, specifically methylates the N4 position of cytidine in position 1402 (C1402) of 16S rRNA. This Xanthomonas campestris pv. campestris (strain B100) protein is Ribosomal RNA small subunit methyltransferase H.